The primary structure comprises 339 residues: MIRVGIIGATGYTGLELVRLLKNHPEAKITYLSSRTYAGKKLEEVFPSTLENSILSEFDPEKVSKNCDVLFTALPAGASYDLVRELKGVKIIDLGADFRFDDPGVYREWYGKELSGYENIKRVYGLPELHREEIKNAQVVGNPGCYPTSVILALAPALKRNLVDPETILVDAKSGVSGAGRKEKVDYLFSEVNESLRPYNVAKHRHVPEMEQELEKISGKKVNVVFTPHLVPMTRGILSTIYVKTDKSLEEIHEAYLEFYRNEPFVHVLPMGIYPSTKWCYGSNHVFIGMQMEERTNTLILMSAIDNLVKGASGQAVQNMNIMFGLDETKGLEFTPIYP.

Cys-145 is a catalytic residue.

The protein belongs to the NAGSA dehydrogenase family. Type 1 subfamily.

It is found in the cytoplasm. It carries out the reaction N-acetyl-L-glutamate 5-semialdehyde + phosphate + NADP(+) = N-acetyl-L-glutamyl 5-phosphate + NADPH + H(+). It participates in amino-acid biosynthesis; L-arginine biosynthesis; N(2)-acetyl-L-ornithine from L-glutamate: step 3/4. Functionally, catalyzes the NADPH-dependent reduction of N-acetyl-5-glutamyl phosphate to yield N-acetyl-L-glutamate 5-semialdehyde. This chain is N-acetyl-gamma-glutamyl-phosphate reductase, found in Thermotoga petrophila (strain ATCC BAA-488 / DSM 13995 / JCM 10881 / RKU-1).